The sequence spans 45 residues: Large ribosomal subunit protein bL34 (45 aa).

This sequence belongs to the bacterial ribosomal protein bL34 family.

The protein is Large ribosomal subunit protein bL34 (rpmH) of Streptomyces bikiniensis.